The chain runs to 428 residues: Glutamate-1-semialdehyde 2,1-aminomutase (428 aa).

K267 is modified (N6-(pyridoxal phosphate)lysine).

This sequence belongs to the class-III pyridoxal-phosphate-dependent aminotransferase family. HemL subfamily. In terms of assembly, homodimer. Pyridoxal 5'-phosphate serves as cofactor.

Its subcellular location is the cytoplasm. It carries out the reaction (S)-4-amino-5-oxopentanoate = 5-aminolevulinate. Its pathway is porphyrin-containing compound metabolism; protoporphyrin-IX biosynthesis; 5-aminolevulinate from L-glutamyl-tRNA(Glu): step 2/2. The protein is Glutamate-1-semialdehyde 2,1-aminomutase of Sulfurihydrogenibium sp. (strain YO3AOP1).